The chain runs to 219 residues: 7-cyano-7-deazaguanine synthase (219 aa).

9 to 19 contacts ATP; it reads YSGGMDSFTVL. The Zn(2+) site is built by Cys185, Cys193, Cys196, and Cys199.

This sequence belongs to the QueC family. Zn(2+) is required as a cofactor.

It carries out the reaction 7-carboxy-7-deazaguanine + NH4(+) + ATP = 7-cyano-7-deazaguanine + ADP + phosphate + H2O + H(+). It functions in the pathway purine metabolism; 7-cyano-7-deazaguanine biosynthesis. In terms of biological role, catalyzes the ATP-dependent conversion of 7-carboxy-7-deazaguanine (CDG) to 7-cyano-7-deazaguanine (preQ(0)). This is 7-cyano-7-deazaguanine synthase from Marinomonas sp. (strain MWYL1).